A 2464-amino-acid polypeptide reads, in one-letter code: Nonribosomal peptide synthetase NPS2 (2464 aa).

The tract at residues 275 to 670 (DDHHPGTSQP…GRIDTQIKLR (396 aa)) is adenylation 1. A Carrier 1 domain is found at 814–888 (TKAEGQLLEI…QIAKALDASS (75 aa)). The residue at position 848 (Ser-848) is an O-(pantetheine 4'-phosphoryl)serine. The condensation 1 stretch occupies residues 924 to 1325 (IYPPFPLQEG…EGLALDLAQG (402 aa)). Residues 1364 to 1437 (EDLLLRLRKI…RMAASAGKKI (74 aa)) enclose the Carrier 2 domain. An O-(pantetheine 4'-phosphoryl)serine modification is found at Ser-1398. Residues 1479–1887 (DVFPVTTLQA…LRVLVDDLDA (409 aa)) form a condensation 2 region. The Carrier 3 domain maps to 1917 to 1993 (SSWDEKSSTL…DLVMRAGAED (77 aa)). An O-(pantetheine 4'-phosphoryl)serine modification is found at Ser-1954. The condensation 3 stretch occupies residues 2047–2340 (GGSRYQHVFG…ATQIQDDLRE (294 aa)).

The protein belongs to the NRP synthetase family.

It participates in siderophore biosynthesis. Its function is as follows. Nonribosomal peptide synthetase; part of the siderophore basidioferrin biosynthetic pathway. The biosynthesis of basidioferrin depends on the hydroxylation of ornithine to N(5)-hydroxyornithine, catalyzed by the monooxygenase SMO1. The second step, the acylation of N(5)-hydroxy-L-ornithine is catalyzed by a not yet identified N-acyltransferase. Finally, assembly of basidioferrin is catalyzed by the nonribosomal peptide synthase (NRPS) NPS2 via amide bond formation between three L-AHO molecules to release the linear L-AHO trimer. N-5-acetyl-N-5-hydroxy-L-ornithine (L-AHO) and N-5-cis-anhydromevalonyl-N-5-hydroxy-L-ornithine (L-AMHO) are accepted as the substrates by the NPS2 adenylation (A) domain, but only L-AHO is trimerized. The chain is Nonribosomal peptide synthetase NPS2 from Ceriporiopsis subvermispora (strain B) (White-rot fungus).